The primary structure comprises 642 residues: Threonine--tRNA ligase (642 aa).

Positions 1 to 65 (MSDIITVTLP…DEDVKLQIFT (65 aa)) constitute a TGS domain. The tract at residues 248–541 (DHRKLGKELD…LIEHFAGAFP (294 aa)) is catalytic. Zn(2+) contacts are provided by cysteine 342, histidine 393, and histidine 518.

It belongs to the class-II aminoacyl-tRNA synthetase family. Homodimer. Zn(2+) is required as a cofactor.

The protein resides in the cytoplasm. The enzyme catalyses tRNA(Thr) + L-threonine + ATP = L-threonyl-tRNA(Thr) + AMP + diphosphate + H(+). Its function is as follows. Catalyzes the attachment of threonine to tRNA(Thr) in a two-step reaction: L-threonine is first activated by ATP to form Thr-AMP and then transferred to the acceptor end of tRNA(Thr). Also edits incorrectly charged L-seryl-tRNA(Thr). In Myxococcus xanthus (strain DK1622), this protein is Threonine--tRNA ligase.